Consider the following 221-residue polypeptide: ATP phosphoribosyltransferase (221 aa).

This sequence belongs to the ATP phosphoribosyltransferase family. Short subfamily. In terms of assembly, heteromultimer composed of HisG and HisZ subunits.

The protein localises to the cytoplasm. It carries out the reaction 1-(5-phospho-beta-D-ribosyl)-ATP + diphosphate = 5-phospho-alpha-D-ribose 1-diphosphate + ATP. It participates in amino-acid biosynthesis; L-histidine biosynthesis; L-histidine from 5-phospho-alpha-D-ribose 1-diphosphate: step 1/9. Its function is as follows. Catalyzes the condensation of ATP and 5-phosphoribose 1-diphosphate to form N'-(5'-phosphoribosyl)-ATP (PR-ATP). Has a crucial role in the pathway because the rate of histidine biosynthesis seems to be controlled primarily by regulation of HisG enzymatic activity. In Anaeromyxobacter dehalogenans (strain 2CP-C), this protein is ATP phosphoribosyltransferase.